Here is a 278-residue protein sequence, read N- to C-terminus: 4-hydroxy-tetrahydrodipicolinate reductase (278 aa).

Residues 13–18 (GAAGKM) and 111–113 (GTT) each bind NAD(+). Histidine 167 acts as the Proton donor/acceptor in catalysis. Histidine 168 lines the (S)-2,3,4,5-tetrahydrodipicolinate pocket. Lysine 171 serves as the catalytic Proton donor. 177–178 (GT) contacts (S)-2,3,4,5-tetrahydrodipicolinate.

The protein belongs to the DapB family.

It is found in the cytoplasm. It carries out the reaction (S)-2,3,4,5-tetrahydrodipicolinate + NAD(+) + H2O = (2S,4S)-4-hydroxy-2,3,4,5-tetrahydrodipicolinate + NADH + H(+). The catalysed reaction is (S)-2,3,4,5-tetrahydrodipicolinate + NADP(+) + H2O = (2S,4S)-4-hydroxy-2,3,4,5-tetrahydrodipicolinate + NADPH + H(+). It functions in the pathway amino-acid biosynthesis; L-lysine biosynthesis via DAP pathway; (S)-tetrahydrodipicolinate from L-aspartate: step 4/4. Its function is as follows. Catalyzes the conversion of 4-hydroxy-tetrahydrodipicolinate (HTPA) to tetrahydrodipicolinate. This Trichormus variabilis (strain ATCC 29413 / PCC 7937) (Anabaena variabilis) protein is 4-hydroxy-tetrahydrodipicolinate reductase.